The chain runs to 413 residues: Divalent metal cation transporter MntH (413 aa).

Residues 1-19 lie on the Cytoplasmic side of the membrane; that stretch reads MTDNRVENSSGRAARKLRL. Residues 20–39 traverse the membrane as a helical segment; it reads ALMGPAFIAAIGYIDPGNFA. At 40-51 the chain is on the periplasmic side; that stretch reads TNIQAGASFGYQ. A helical membrane pass occupies residues 52 to 71; that stretch reads LLWVVVWANLMAMLIQILSA. Over 72–95 the chain is Cytoplasmic; it reads KLGIATGKNLAEQIRDHYPRPVVW. A helical transmembrane segment spans residues 96–118; it reads FYWVQAEIIAMATDLAEFIGAAI. The Periplasmic portion of the chain corresponds to 119–125; sequence GFKLILG. The chain crosses the membrane as a helical span at residues 126–145; the sequence is VSLLQGAVLTGIATFLILML. Topologically, residues 146–155 are cytoplasmic; the sequence is QRRGQKPLEK. Residues 156-175 form a helical membrane-spanning segment; the sequence is VIGGLLLFVAAAYIVELFFS. Residues 176–196 lie on the Periplasmic side of the membrane; sequence QPDMAQLGKGMVIPALPNPEA. Residues 197–220 traverse the membrane as a helical segment; the sequence is VFLAAGVLGATIMPHVIYLHSSLT. Over 221–238 the chain is Cytoplasmic; the sequence is QHLHGGTRQQRYSATKWD. A helical membrane pass occupies residues 239-258; that stretch reads VAIAMTIAGFVNLAMMATAA. Topologically, residues 259 to 276 are periplasmic; the sequence is AAFHFSGHTGIADLDQAY. Residues 277-297 form a helical membrane-spanning segment; sequence LTLEPLLSHAAATVFGLSLVA. Over 298-327 the chain is Cytoplasmic; it reads AGLSSTVVGTLAGQVVMQGFVRFHIPLWVR. A helical transmembrane segment spans residues 328 to 344; it reads RSITMLPSFIVILMGLD. Residues 345–350 lie on the Periplasmic side of the membrane; the sequence is PTRILV. The helical transmembrane segment at 351–370 threads the bilayer; it reads MSQVLLSFGIALALVPLLIF. Over 371–387 the chain is Cytoplasmic; that stretch reads TSNATLMGELVNTRRVK. The helical transmembrane segment at 388 to 406 threads the bilayer; it reads QIGWIIVVLVVALNIWLLV. The Periplasmic portion of the chain corresponds to 407 to 413; the sequence is GTVMGLS.

This sequence belongs to the NRAMP family.

It is found in the cell inner membrane. Its function is as follows. H(+)-stimulated, divalent metal cation uptake system. The sequence is that of Divalent metal cation transporter MntH from Salmonella gallinarum (strain 287/91 / NCTC 13346).